The chain runs to 606 residues: Diphthine--ammonia ligase (606 aa).

In the N-terminal section; belongs to the Diphthine--ammonia ligase family. It in the C-terminal section; belongs to the RutC family.

The protein resides in the cytoplasm. It is found in the nucleus. The catalysed reaction is diphthine-[translation elongation factor 2] + NH4(+) + ATP = diphthamide-[translation elongation factor 2] + AMP + diphosphate + H(+). It participates in protein modification; peptidyl-diphthamide biosynthesis. Its function is as follows. Amidase that catalyzes the last step of diphthamide biosynthesis using ammonium and ATP. Diphthamide biosynthesis consists in the conversion of an L-histidine residue in the translation elongation factor eEF-2 (eft201 or eft202) to diphthamide. Has a role in meiosis. The sequence is that of Diphthine--ammonia ligase (mug71) from Schizosaccharomyces pombe (strain 972 / ATCC 24843) (Fission yeast).